Here is a 184-residue protein sequence, read N- to C-terminus: Peptide deformylase (184 aa).

Fe cation-binding residues include C98 and H140. E141 is an active-site residue. Position 144 (H144) interacts with Fe cation.

It belongs to the polypeptide deformylase family. Fe(2+) is required as a cofactor.

It carries out the reaction N-terminal N-formyl-L-methionyl-[peptide] + H2O = N-terminal L-methionyl-[peptide] + formate. Its function is as follows. Removes the formyl group from the N-terminal Met of newly synthesized proteins. Requires at least a dipeptide for an efficient rate of reaction. N-terminal L-methionine is a prerequisite for activity but the enzyme has broad specificity at other positions. This Bacteroides thetaiotaomicron (strain ATCC 29148 / DSM 2079 / JCM 5827 / CCUG 10774 / NCTC 10582 / VPI-5482 / E50) protein is Peptide deformylase.